Consider the following 366-residue polypeptide: Envelope glycoprotein M (366 aa).

Residues 1-17 lie on the Intravirion side of the membrane; that stretch reads MMKASRSDTFMLRTWIQ. A helical membrane pass occupies residues 18-38; the sequence is LLVLFVIMFIMSAILPIAASV. At 39–83 the chain is on the virion surface side; it reads EGLGFPCYFPNLVDYSLLNLTLRNAAKHLTPTLFLEAPELFVYIT. A helical membrane pass occupies residues 84-104; sequence WSVLVDLASAIYYVVGALAIL. The Intravirion portion of the chain corresponds to 105–113; the sequence is QARKTHLTS. The helical transmembrane segment at 114–134 threads the bilayer; it reads MITLQTWINLVGSHTMLFIGI. The Virion surface segment spans residues 135 to 153; sequence ARMWTLQLFIHVLSYKHVM. Residues 154–174 form a helical membrane-spanning segment; the sequence is LAAFIYFLHFCLSYMHTLSLV. Over 175 to 209 the chain is Intravirion; it reads SRNSPKWSVLLMEQHIPKQSLLSTILDYGKPLCVN. A helical transmembrane segment spans residues 210-230; the sequence is MYLSLLALEMLVFSLGFMMAI. Residues 231–235 lie on the Virion surface side of the membrane; it reads GNSFY. Residues 236 to 256 form a helical membrane-spanning segment; that stretch reads ILVSDTVLASINLYFVLTTFW. The Intravirion portion of the chain corresponds to 257-269; that stretch reads YMMTEMFLQDYLK. A helical transmembrane segment spans residues 270-290; sequence LQFGFYLGVFSGSLILLLPVL. Over 291 to 304 the chain is Virion surface; it reads RYEAVFVSANLHKT. The chain crosses the membrane as a helical span at residues 305-325; the sequence is VAVNIAMIPAMCVIAMMFRLF. At 326-366 the chain is on the intravirion side; that stretch reads RYSQQVRKPENSYTPLPKRFKKRRQKQDQQLIMVETSDEEL.

It belongs to the herpesviridae glycoprotein M family. As to quaternary structure, interacts (via N-terminus) with gN (via N-terminus). The gM-gN heterodimer forms the gCII complex.

It localises to the virion membrane. The protein resides in the host Golgi apparatus. It is found in the host trans-Golgi network. The protein localises to the host endosome membrane. Its subcellular location is the host nucleus inner membrane. Envelope glycoprotein important for virion assembly and egress. Plays a role in the correct incorporation of gH-gL into virion membrane. Directs the glycoprotein N (gN) to the host trans-Golgi network. The chain is Envelope glycoprotein M from Saimiri sciureus (Common squirrel monkey).